The following is a 317-amino-acid chain: NAC domain-containing protein 19 (317 aa).

An NAC domain is found at 14–162 (LPPGFRFYPT…DWVLCRIYKK (149 aa)).

As to quaternary structure, dimer. Interacts with RHA2A, RHA2B or RHG1A, but not with RHA3A or RHA3B. As to expression, expressed in stems, flowers, cauline leaves and rosettes.

The protein resides in the nucleus. In terms of biological role, transcription factors that bind specifically to the 5'-CATGTG-3' motif. The sequence is that of NAC domain-containing protein 19 (NAC019) from Arabidopsis thaliana (Mouse-ear cress).